A 151-amino-acid polypeptide reads, in one-letter code: S-ribosylhomocysteine lyase (151 aa).

3 residues coordinate Fe cation: His54, His58, and Cys121.

It belongs to the LuxS family. As to quaternary structure, homodimer. Fe cation serves as cofactor.

It catalyses the reaction S-(5-deoxy-D-ribos-5-yl)-L-homocysteine = (S)-4,5-dihydroxypentane-2,3-dione + L-homocysteine. Functionally, involved in the synthesis of autoinducer 2 (AI-2) which is secreted by bacteria and is used to communicate both the cell density and the metabolic potential of the environment. The regulation of gene expression in response to changes in cell density is called quorum sensing. Catalyzes the transformation of S-ribosylhomocysteine (RHC) to homocysteine (HC) and 4,5-dihydroxy-2,3-pentadione (DPD). The sequence is that of S-ribosylhomocysteine lyase from Clostridium botulinum (strain Alaska E43 / Type E3).